The sequence spans 426 residues: tRNA (guanine(37)-N(1))-methyltransferase (426 aa).

S-adenosyl-L-methionine is bound by residues H203, 242-243 (DL), 269-270 (DA), and N292. Residues 374 to 426 (RISFKMPTLKKRKDTENNDDQENNNNSSNNNNNNKIDYNEAVSSGGEGKKIKH) form a disordered region. The span at 396 to 407 (NNNNSSNNNNNN) shows a compositional bias: low complexity.

It belongs to the class I-like SAM-binding methyltransferase superfamily. TRM5/TYW2 family. In terms of assembly, monomer.

The protein resides in the mitochondrion matrix. The protein localises to the nucleus. Its subcellular location is the cytoplasm. It catalyses the reaction guanosine(37) in tRNA + S-adenosyl-L-methionine = N(1)-methylguanosine(37) in tRNA + S-adenosyl-L-homocysteine + H(+). Its function is as follows. Specifically methylates the N1 position of guanosine-37 in various cytoplasmic and mitochondrial tRNAs. Methylation is not dependent on the nature of the nucleoside 5' of the target nucleoside. This is the first step in the biosynthesis of wybutosine (yW), a modified base adjacent to the anticodon of tRNAs and required for accurate decoding. In Heterostelium pallidum (strain ATCC 26659 / Pp 5 / PN500) (Cellular slime mold), this protein is tRNA (guanine(37)-N(1))-methyltransferase (trmt5).